A 399-amino-acid chain; its full sequence is Phosphoglycerate kinase (399 aa).

Substrate is bound by residues 22-24 (DLN), R37, 60-63 (HFGR), R119, and R152. ATP-binding positions include K202, E324, and 354–357 (GGDT).

The protein belongs to the phosphoglycerate kinase family. As to quaternary structure, monomer.

The protein resides in the cytoplasm. It catalyses the reaction (2R)-3-phosphoglycerate + ATP = (2R)-3-phospho-glyceroyl phosphate + ADP. It participates in carbohydrate degradation; glycolysis; pyruvate from D-glyceraldehyde 3-phosphate: step 2/5. In Rhizobium meliloti (strain 1021) (Ensifer meliloti), this protein is Phosphoglycerate kinase.